The primary structure comprises 528 residues: Intestinal-type alkaline phosphatase (528 aa).

An N-terminal signal peptide occupies residues 1–19; sequence MQGPWVLLLLGLRLQLSLG. Aspartate 61 serves as a coordination point for Mg(2+). Positions 61 and 111 each coordinate Zn(2+). Residue serine 111 is the Phosphoserine intermediate of the active site. Cysteine 140 and cysteine 202 are oxidised to a cystine. Asparagine 141 carries N-linked (GlcNAc...) asparagine glycosylation. Serine 174 contacts Mg(2+). Position 235 (glutamate 235) interacts with Ca(2+). The N-linked (GlcNAc...) asparagine glycan is linked to asparagine 268. Residues phenylalanine 288, glutamate 289, and aspartate 304 each contribute to the Ca(2+) site. Residue glutamate 330 participates in Mg(2+) binding. Zn(2+) is bound by residues aspartate 335, histidine 339, aspartate 376, and histidine 377. A glycan (N-linked (GlcNAc...) asparagine) is linked at asparagine 429. Histidine 451 is a Zn(2+) binding site. Cysteine 486 and cysteine 493 form a disulfide bridge. Aspartate 503 is lipidated: GPI-anchor amidated aspartate. Residues 504–528 constitute a propeptide, removed in mature form; it reads AAHPVAASLPLLAGTLLLLGASAAP.

The protein belongs to the alkaline phosphatase family. As to quaternary structure, homodimer. The cofactor is Mg(2+). It depends on Zn(2+) as a cofactor. Requires Ca(2+) as cofactor.

The protein localises to the cell membrane. It catalyses the reaction a phosphate monoester + H2O = an alcohol + phosphate. Alkaline phosphatase that can hydrolyze various phosphate compounds. The chain is Intestinal-type alkaline phosphatase (ALPI) from Homo sapiens (Human).